We begin with the raw amino-acid sequence, 448 residues long: Exodeoxyribonuclease 7 large subunit (448 aa).

Belongs to the XseA family. Heterooligomer composed of large and small subunits.

It localises to the cytoplasm. The catalysed reaction is Exonucleolytic cleavage in either 5'- to 3'- or 3'- to 5'-direction to yield nucleoside 5'-phosphates.. Functionally, bidirectionally degrades single-stranded DNA into large acid-insoluble oligonucleotides, which are then degraded further into small acid-soluble oligonucleotides. The sequence is that of Exodeoxyribonuclease 7 large subunit from Photobacterium profundum (strain SS9).